Here is a 932-residue protein sequence, read N- to C-terminus: Isoleucine--tRNA ligase (932 aa).

A 'HIGH' region motif is present at residues 57–67 (PYANGDIHIGT). Glutamate 559 is an L-isoleucyl-5'-AMP binding site. Positions 600–604 (KMSKS) match the 'KMSKS' region motif. Lysine 603 lines the ATP pocket. Residues cysteine 899, cysteine 902, cysteine 919, and cysteine 922 each coordinate Zn(2+).

It belongs to the class-I aminoacyl-tRNA synthetase family. IleS type 1 subfamily. As to quaternary structure, monomer. Requires Zn(2+) as cofactor.

It is found in the cytoplasm. It catalyses the reaction tRNA(Ile) + L-isoleucine + ATP = L-isoleucyl-tRNA(Ile) + AMP + diphosphate. In terms of biological role, catalyzes the attachment of isoleucine to tRNA(Ile). As IleRS can inadvertently accommodate and process structurally similar amino acids such as valine, to avoid such errors it has two additional distinct tRNA(Ile)-dependent editing activities. One activity is designated as 'pretransfer' editing and involves the hydrolysis of activated Val-AMP. The other activity is designated 'posttransfer' editing and involves deacylation of mischarged Val-tRNA(Ile). This Thermoanaerobacter pseudethanolicus (strain ATCC 33223 / 39E) (Clostridium thermohydrosulfuricum) protein is Isoleucine--tRNA ligase.